The chain runs to 318 residues: uncharacterized protein (318 aa).

Belongs to the glycosyltransferase 2 family.

This is an uncharacterized protein from Rickettsia prowazekii (strain Madrid E).